Consider the following 554-residue polypeptide: Phenylalanine--tRNA ligase beta subunit (554 aa).

One can recognise a B5 domain in the interval 276 to 351 (LTPKSRIISV…INYGYEKFDG (76 aa)). Residues Asp329, Asp335, Glu338, and Glu339 each coordinate Mg(2+).

The protein belongs to the phenylalanyl-tRNA synthetase beta subunit family. Type 2 subfamily. As to quaternary structure, tetramer of two alpha and two beta subunits. Mg(2+) serves as cofactor.

The protein resides in the cytoplasm. It catalyses the reaction tRNA(Phe) + L-phenylalanine + ATP = L-phenylalanyl-tRNA(Phe) + AMP + diphosphate + H(+). The sequence is that of Phenylalanine--tRNA ligase beta subunit from Methanococcus maripaludis (strain DSM 14266 / JCM 13030 / NBRC 101832 / S2 / LL).